A 357-amino-acid polypeptide reads, in one-letter code: Multiple sugar-binding periplasmic protein SbpA (357 aa).

The first 20 residues, 1 to 20 (MSSSFTTTLAGMAVGMLVLA), serve as a signal peptide directing secretion.

The protein belongs to the bacterial solute-binding protein 2 family.

It is found in the periplasm. Functionally, mediates chemotaxis towards D-galactose, L-arabinose and D-fucose but not towards D-fructose. Probably part of a binding-protein high affinity uptake system. The chain is Multiple sugar-binding periplasmic protein SbpA (sbpA) from Azospirillum brasilense.